The following is a 290-amino-acid chain: Programmed cell death 1 ligand 1 (290 aa).

Positions 1-18 (MRIFAVFIFMTYWHLLNA) are cleaved as a signal peptide. In terms of domain architecture, Ig-like V-type spans 19–127 (FTVTVPKDLY…YGGADYKRIT (109 aa)). Residues 19–238 (FTVTVPKDLY…LPLAHPPNER (220 aa)) lie on the Extracellular side of the membrane. A glycan (N-linked (GlcNAc...) asparagine) is linked at Asn35. Cystine bridges form between Cys40-Cys114 and Cys155-Cys209. The Ig-like C2-type domain maps to 133–225 (PYNKINQRIL…PEENHTAELV (93 aa)). N-linked (GlcNAc...) asparagine glycosylation is found at Asn192, Asn200, and Asn219. The helical transmembrane segment at 239–259 (THLVILGAILLCLGVALTFIF) threads the bilayer. Over 260-290 (RLRKGRMMDVKKCGIQDTNSKKQSDTHLEET) the chain is Cytoplasmic.

The protein belongs to the immunoglobulin superfamily. BTN/MOG family. As to quaternary structure, interacts with PDCD1. Interacts (via transmembrane domain) with CMTM4 and CMTM6. Interacts with (phosphorylated) STAT3; promoting nuclear translocation. Interacts with CD80. In terms of assembly, may form homomultimers. Post-translationally, ubiquitinated; STUB1 likely mediates polyubiquitination of PD-L1/CD274 triggering its degradation. Ubiquitinated by MARCHF8; leading to degradation. Deubiquitinated by USP22; leading to stabilization. As to expression, highly expressed in the heart, skeletal muscle, placenta and lung. Weakly expressed in the thymus, spleen, kidney and liver. Expressed on activated T- and B-cells, dendritic cells, keratinocytes and monocytes. Widely expressed, highest in lung, liver and pituitary and in various peripheral blood cells, including neutrophils and some subtypes of lymphoid and myeloid cells.

It localises to the cell membrane. It is found in the early endosome membrane. The protein localises to the recycling endosome membrane. Its subcellular location is the nucleus. The protein resides in the endomembrane system. It localises to the secreted. Plays a critical role in induction and maintenance of immune tolerance to self. As a ligand for the inhibitory receptor PDCD1/PD-1, modulates the activation threshold of T-cells and limits T-cell effector response. Through a yet unknown activating receptor, may costimulate T-cell subsets that predominantly produce interleukin-10 (IL10). Can also act as a transcription coactivator: in response to hypoxia, translocates into the nucleus via its interaction with phosphorylated STAT3 and promotes transcription of GSDMC, leading to pyroptosis. In terms of biological role, the PDCD1-mediated inhibitory pathway is exploited by tumors to attenuate anti-tumor immunity and escape destruction by the immune system, thereby facilitating tumor survival. The interaction with PDCD1/PD-1 inhibits cytotoxic T lymphocytes (CTLs) effector function. The blockage of the PDCD1-mediated pathway results in the reversal of the exhausted T-cell phenotype and the normalization of the anti-tumor response, providing a rationale for cancer immunotherapy. The chain is Programmed cell death 1 ligand 1 from Homo sapiens (Human).